Here is a 413-residue protein sequence, read N- to C-terminus: Gamma-DL-glutamyl hydrolase (413 aa).

Residues 1–32 (MNTLANWKKFLLVAVIICFLVPIMTKAEIAEA) form the signal peptide. NlpC/P60 domains are found at residues 33 to 159 (DTSS…RRIA), 163 to 287 (ATAD…RRFD), and 291 to 413 (IPKE…IRVQ). Cys-194 serves as the catalytic Nucleophile. The Proton acceptor role is filled by His-247. Gln-259 is an active-site residue.

Belongs to the peptidase C40 family.

It is found in the secreted. Its subcellular location is the cell wall. With respect to regulation, inhibited by pretreatment with 1 mM 4-(hydroxymercuri)benzoate, a sulfhydryl inhibitor. Cleaves, in an endo-type manner, the gamma-glutamyl bond between D-glutamate and L-glutamate of poly-gamma-glutamate (PGA). This Bacillus subtilis (strain 168) protein is Gamma-DL-glutamyl hydrolase (pgdS).